A 279-amino-acid chain; its full sequence is S-methyl-5'-thioadenosine phosphorylase (279 aa).

Phosphate is bound by residues S13, R55–H56, and T88–A89. M191 lines the substrate pocket. T192 is a phosphate binding site. D215–D217 is a substrate binding site.

It belongs to the PNP/MTAP phosphorylase family. MTAP subfamily. As to quaternary structure, homotrimer.

Its subcellular location is the cytoplasm. The protein localises to the nucleus. The enzyme catalyses S-methyl-5'-thioadenosine + phosphate = 5-(methylsulfanyl)-alpha-D-ribose 1-phosphate + adenine. It functions in the pathway amino-acid biosynthesis; L-methionine biosynthesis via salvage pathway; S-methyl-5-thio-alpha-D-ribose 1-phosphate from S-methyl-5'-thioadenosine (phosphorylase route): step 1/1. Its function is as follows. Catalyzes the reversible phosphorylation of S-methyl-5'-thioadenosine (MTA) to adenine and 5-methylthioribose-1-phosphate. Involved in the breakdown of MTA, a major by-product of polyamine biosynthesis. Responsible for the first step in the methionine salvage pathway after MTA has been generated from S-adenosylmethionine. Has broad substrate specificity with 6-aminopurine nucleosides as preferred substrates. This chain is S-methyl-5'-thioadenosine phosphorylase, found in Anopheles darlingi (Mosquito).